Reading from the N-terminus, the 36-residue chain is Beta-amanitin proprotein (36 aa).

Residues 1–10 constitute a propeptide that is removed on maturation; the sequence is MSDINATRLP. The segment at residues 11–18 is a cross-link (cyclopeptide (Ile-Pro)); the sequence is IWGIGCDP. The segment at residues 12–16 is a cross-link (2'-cysteinyl-6'-hydroxytryptophan sulfoxide (Trp-Cys)); sequence WGIGC. Residues 19 to 36 constitute a propeptide that is removed on maturation; it reads CIGDDVTALLTRGEASLC.

Belongs to the MSDIN fungal toxin family. In terms of processing, processed by the macrocyclase-peptidase enzyme POPB to yield a toxic cyclic decapeptide. POPB first removes 10 residues from the N-terminus. Conformational trapping of the remaining peptide forces the enzyme to release this intermediate rather than proceed to macrocyclization. The enzyme rebinds the remaining peptide in a different conformation and catalyzes macrocyclization of the N-terminal 8 residues.

Toxin belonging to the bicyclic octapeptides amatoxins that acts by binding non-competitively to RNA polymerase II and greatly slowing the elongation of transcripts from target promoters. The protein is Beta-amanitin proprotein of Amanita phalloides (Death cap).